The primary structure comprises 1406 residues: Ubiquitin carboxyl-terminal hydrolase 6 (1406 aa).

The region spanning Gly-100 to Gly-292 is the Rab-GAP TBC domain. A disordered region spans residues Lys-348–Thr-380. The USP domain occupies Thr-532–Gln-1369. Cys-541 functions as the Nucleophile in the catalytic mechanism. The segment at His-1120–Asn-1231 is disordered. Basic and acidic residues predominate over residues Glu-1129–Leu-1155. Over residues Leu-1156–Pro-1197 the composition is skewed to low complexity. The Proton acceptor role is filled by His-1328. A disordered region spans residues Lys-1384–Gln-1406.

Belongs to the peptidase C19 family. As to quaternary structure, interacts with RAC1 and CDC42. Interacts (via Rab-GAP TBC domain) with ARF6. Interacts with calmodulin (CALM1, CALM2 and/or CALM3); the interaction is calcium-dependent. In terms of processing, monubiquitinated; ubiquitination is calmodulin and calcium dependent. Testis specific. Expressed in various cancer cell lines.

It is found in the cell membrane. The protein resides in the cytoplasm. Its subcellular location is the endosome. It catalyses the reaction Thiol-dependent hydrolysis of ester, thioester, amide, peptide and isopeptide bonds formed by the C-terminal Gly of ubiquitin (a 76-residue protein attached to proteins as an intracellular targeting signal).. Its function is as follows. Deubiquitinase with an ATP-independent isopeptidase activity, cleaving at the C-terminus of the ubiquitin moiety. Catalyzes its own deubiquitination. In vitro, isoform 2, but not isoform 3, shows deubiquitinating activity. Promotes plasma membrane localization of ARF6 and selectively regulates ARF6-dependent endocytic protein trafficking. Is able to initiate tumorigenesis by inducing the production of matrix metalloproteinases following NF-kappa-B activation. May act as a GTPase-activating protein for RAB3A. The sequence is that of Ubiquitin carboxyl-terminal hydrolase 6 (USP6) from Homo sapiens (Human).